Here is a 62-residue protein sequence, read N- to C-terminus: Large ribosomal subunit protein bL32 (62 aa).

Over residues 1–16 the composition is skewed to basic residues; that stretch reads MAVQKNRKTRSKRGMR. A disordered region spans residues 1 to 62; the sequence is MAVQKNRKTR…VISQGDSDDE (62 aa). Polar residues predominate over residues 53–62; the sequence is VISQGDSDDE.

It belongs to the bacterial ribosomal protein bL32 family.

The chain is Large ribosomal subunit protein bL32 from Alcanivorax borkumensis (strain ATCC 700651 / DSM 11573 / NCIMB 13689 / SK2).